The sequence spans 398 residues: Subtilisin-like protease CPC735_015300 (398 aa).

Positions 1–19 (MGFIKTLSLSLAAASAANA) are cleaved as a signal peptide. A propeptide spanning residues 20 to 116 (AKILSPSRPD…IEHDHVVRLT (97 aa)) is cleaved from the precursor. The region spanning 35–115 (QYIVVMKDGV…FIEHDHVVRL (81 aa)) is the Inhibitor I9 domain. The Peptidase S8 domain maps to 126–398 (TWGLGRVSHQ…NKLTYNGNGQ (273 aa)). Catalysis depends on charge relay system residues D158 and H189. N250 carries an N-linked (GlcNAc...) asparagine glycan. S344 serves as the catalytic Charge relay system. Residue N362 is glycosylated (N-linked (GlcNAc...) asparagine).

Belongs to the peptidase S8 family.

The protein resides in the secreted. Its function is as follows. Secreted subtilisin-like serine protease with keratinolytic activity that contributes to pathogenicity. The polypeptide is Subtilisin-like protease CPC735_015300 (Coccidioides posadasii (strain C735) (Valley fever fungus)).